The chain runs to 608 residues: UvrABC system protein C (608 aa).

The GIY-YIG domain maps to 13–91 (HDPGVYRMFD…IKTFQPRYNV (79 aa)). A UVR domain is found at 201–236 (QQVLDHLIGKMERASRALNFEEAARYRDQIQAVRSV).

It belongs to the UvrC family. In terms of assembly, interacts with UvrB in an incision complex.

The protein localises to the cytoplasm. Functionally, the UvrABC repair system catalyzes the recognition and processing of DNA lesions. UvrC both incises the 5' and 3' sides of the lesion. The N-terminal half is responsible for the 3' incision and the C-terminal half is responsible for the 5' incision. This is UvrABC system protein C from Mannheimia succiniciproducens (strain KCTC 0769BP / MBEL55E).